The primary structure comprises 184 residues: NADH-quinone oxidoreductase subunit J (184 aa).

The helical transmembrane segment at 1 to 21 (MEFAFYICGLIAILATLRVIT) threads the bilayer. Residues 22–27 (HTNPVH) are Cytoplasmic-facing. A helical membrane pass occupies residues 28-48 (ALLYLIISLLAISGVFFSLGA). The Periplasmic segment spans residues 49–53 (YFAGA). A helical transmembrane segment spans residues 54-74 (LEIIVYAGAIMVLFVFVVMML). The Cytoplasmic segment spans residues 75–91 (NLGGSEIEQERQWLKPQ). Residues 92–112 (VWIGPAILSAIMLVVIVYAIL) form a helical membrane-spanning segment. Residues 113-137 (GVNDQGIDGTPISAKAVGITLFGPY) lie on the Periplasmic side of the membrane. A helical membrane pass occupies residues 138–158 (VLAVELASMLLLAGLVVAFHV). Residues 159 to 184 (GREERAGEVLSNRKDDSAKRKTEEHA) lie on the Cytoplasmic side of the membrane.

Belongs to the complex I subunit 6 family. In terms of assembly, composed of 13 different subunits. Subunits NuoA, H, J, K, L, M, N constitute the membrane sector of the complex.

It is found in the cell inner membrane. The catalysed reaction is a quinone + NADH + 5 H(+)(in) = a quinol + NAD(+) + 4 H(+)(out). Its function is as follows. NDH-1 shuttles electrons from NADH, via FMN and iron-sulfur (Fe-S) centers, to quinones in the respiratory chain. The immediate electron acceptor for the enzyme in this species is believed to be ubiquinone. Couples the redox reaction to proton translocation (for every two electrons transferred, four hydrogen ions are translocated across the cytoplasmic membrane), and thus conserves the redox energy in a proton gradient. This Escherichia coli O157:H7 protein is NADH-quinone oxidoreductase subunit J (nuoJ).